The sequence spans 433 residues: Homogentisate 1,2-dioxygenase (433 aa).

The active-site Proton acceptor is the H288. 2 residues coordinate Fe cation: H331 and E337. Y346 and H367 together coordinate homogentisate. Residue H367 coordinates Fe cation.

It belongs to the homogentisate dioxygenase family. Hexamer; dimer of trimers. Fe cation is required as a cofactor.

It catalyses the reaction homogentisate + O2 = 4-maleylacetoacetate + H(+). It participates in amino-acid degradation; L-phenylalanine degradation; acetoacetate and fumarate from L-phenylalanine: step 4/6. In terms of biological role, involved in the catabolism of homogentisate (2,5-dihydroxyphenylacetate or 2,5-OH-PhAc), a central intermediate in the degradation of phenylalanine and tyrosine. Catalyzes the oxidative ring cleavage of the aromatic ring of homogentisate to yield maleylacetoacetate. The chain is Homogentisate 1,2-dioxygenase from Pseudomonas putida (strain ATCC 700007 / DSM 6899 / JCM 31910 / BCRC 17059 / LMG 24140 / F1).